The chain runs to 106 residues: Large ribosomal subunit protein bL31B (106 aa).

Residues 85–106 (PVQVAEEPVAKGKKKPSLKKKK) form a disordered region. The span at 95–106 (KGKKKPSLKKKK) shows a compositional bias: basic residues.

Belongs to the bacterial ribosomal protein bL31 family. Type B subfamily. As to quaternary structure, part of the 50S ribosomal subunit.

This Chlamydia felis (strain Fe/C-56) (Chlamydophila felis) protein is Large ribosomal subunit protein bL31B.